The following is a 197-amino-acid chain: TM2 domain-containing protein 1 (197 aa).

An N-terminal signal peptide occupies residues 1-32 (MAFRWRSLMRFRSTTRLLLLFTFCLTVIHSLG). At 33–105 (NDVDSCDKLH…GFNKTIPCRN (73 aa)) the chain is on the extracellular side. Asn77, Asn84, Asn98, and Asn105 each carry an N-linked (GlcNAc...) asparagine glycan. A helical transmembrane segment spans residues 106–126 (VSGYSYKVAVALSLFLGWIGA). Residues 108-155 (GYSYKVAVALSLFLGWIGADRFYLGYPALGLLKFCTVGFCGIGSLVDF) form the TM2 domain. Topologically, residues 127-143 (DRFYLGYPALGLLKFCT) are cytoplasmic. The helical transmembrane segment at 144-164 (VGFCGIGSLVDFMLISMQIVG) threads the bilayer. Residues 165–197 (PSDGSDYIVDYYGARLTRLSITNETYRRMQPSP) lie on the Extracellular side of the membrane. An N-linked (GlcNAc...) asparagine glycan is attached at Asn187.

This sequence belongs to the TM2 family.

It localises to the membrane. The polypeptide is TM2 domain-containing protein 1 (tm2d1) (Danio rerio (Zebrafish)).